Consider the following 364-residue polypeptide: Appendage-associated protein (364 aa).

2 coiled-coil regions span residues 142–196 (IIHE…AECR) and 288–313 (RIAQ…ALGK).

Its subcellular location is the secreted. In terms of biological role, associates with actin filament appendages that are formed in the inclusion appendages of the parasitophorous vacuole during infection of the host erythrocyte. The chain is Appendage-associated protein from Anaplasma marginale (strain Illinois).